Here is a 127-residue protein sequence, read N- to C-terminus: Fluoride-specific ion channel FluC (127 aa).

4 helical membrane passes run 8–28 (LLIA…QYWF), 37–57 (PWGT…VYAI), 68–88 (WKFL…TFSY), and 100–120 (ILFL…AFAG). Glycine 78 and threonine 81 together coordinate Na(+).

It belongs to the fluoride channel Fluc/FEX (TC 1.A.43) family.

It localises to the cell inner membrane. The enzyme catalyses fluoride(in) = fluoride(out). Its activity is regulated as follows. Na(+) is not transported, but it plays an essential structural role and its presence is essential for fluoride channel function. Fluoride-specific ion channel. Important for reducing fluoride concentration in the cell, thus reducing its toxicity. The polypeptide is Fluoride-specific ion channel FluC (Leptospira interrogans serogroup Icterohaemorrhagiae serovar Lai (strain 56601)).